An 89-amino-acid chain; its full sequence is Small ribosomal subunit protein uS15 (89 aa).

It belongs to the universal ribosomal protein uS15 family. Part of the 30S ribosomal subunit. Forms a bridge to the 50S subunit in the 70S ribosome, contacting the 23S rRNA.

Functionally, one of the primary rRNA binding proteins, it binds directly to 16S rRNA where it helps nucleate assembly of the platform of the 30S subunit by binding and bridging several RNA helices of the 16S rRNA. Its function is as follows. Forms an intersubunit bridge (bridge B4) with the 23S rRNA of the 50S subunit in the ribosome. In Ligilactobacillus salivarius (strain UCC118) (Lactobacillus salivarius), this protein is Small ribosomal subunit protein uS15.